We begin with the raw amino-acid sequence, 293 residues long: RNA-binding Raly-like protein (293 aa).

Positions 21 to 92 (SRVFIGNLNT…QPLDINMAGE (72 aa)) constitute an RRM domain. Disordered stretches follow at residues 159 to 195 (PRAA…KLKS) and 245 to 293 (QDEC…LQIK). Low complexity predominate over residues 176 to 192 (KGGSRSAVSGSSSSGSK). Residues 192–254 (KLKSDELQTI…QDECVSENAD (63 aa)) adopt a coiled-coil conformation. A compositionally biased stretch (acidic residues) spans 259 to 284 (EPAEGAPDADGEELTDGVEEDFDEDG).

The protein belongs to the RRM HNRPC family. RALY subfamily.

The polypeptide is RNA-binding Raly-like protein (RALYL) (Bos taurus (Bovine)).